A 431-amino-acid polypeptide reads, in one-letter code: Adenylosuccinate synthetase (431 aa).

GTP contacts are provided by residues 12–18 (GDEGKGK) and 40–42 (GHT). Aspartate 13 serves as the catalytic Proton acceptor. Positions 13 and 40 each coordinate Mg(2+). Residues 13–16 (DEGK), 38–41 (NAGH), threonine 128, arginine 142, glutamine 223, threonine 238, and arginine 301 each bind IMP. Catalysis depends on histidine 41, which acts as the Proton donor. Substrate is bound at residue 297-303 (TVTGRPR). GTP-binding positions include arginine 303, 329–331 (SID), and 411–413 (SVG).

Belongs to the adenylosuccinate synthetase family. Homodimer. It depends on Mg(2+) as a cofactor.

The protein localises to the cytoplasm. The catalysed reaction is IMP + L-aspartate + GTP = N(6)-(1,2-dicarboxyethyl)-AMP + GDP + phosphate + 2 H(+). It functions in the pathway purine metabolism; AMP biosynthesis via de novo pathway; AMP from IMP: step 1/2. Functionally, plays an important role in the de novo pathway of purine nucleotide biosynthesis. Catalyzes the first committed step in the biosynthesis of AMP from IMP. In Lacticaseibacillus casei (strain BL23) (Lactobacillus casei), this protein is Adenylosuccinate synthetase.